The chain runs to 164 residues: R-phycoerythrin alpha chain (164 aa).

(2R,3E)-phycoerythrobilin contacts are provided by N47, K81, C82, R84, H88, R137, C139, and R142.

This sequence belongs to the phycobiliprotein family. Heterododecamer of 6 alpha and 6 beta chains. The basic functional unit of phycobiliproteins is a ring-shaped hexamer formed from two back-to-back trimers contacting via the alpha chain subunits. The trimers are composed of alpha/beta subunit heterodimers arranged around a three-fold axis of symmetry. The phycoerythrins also contain a gamma subunit which is located in the center of the hexamer. Contains two covalently linked phycoerythrobilin chromophores. In PubMed:8876649 the authors refer to the bilins as phycoerythrobilins. In the PDB entries, the bilins are named as phycocyanobilins although the modeled compounds correspond to phycoerythrobilins.

It is found in the plastid. The protein localises to the chloroplast thylakoid membrane. Its function is as follows. Light-harvesting photosynthetic tetrapyrrole chromophore-protein from the phycobiliprotein complex. This is R-phycoerythrin alpha chain (cpeA) from Polysiphonia urceolata (Red alga).